The chain runs to 490 residues: ATP synthase subunit beta, chloroplastic (490 aa).

Residue 170 to 177 (GGAGVGKT) participates in ATP binding.

The protein belongs to the ATPase alpha/beta chains family. In terms of assembly, F-type ATPases have 2 components, CF(1) - the catalytic core - and CF(0) - the membrane proton channel. CF(1) has five subunits: alpha(3), beta(3), gamma(1), delta(1), epsilon(1). CF(0) has four main subunits: a(1), b(1), b'(1) and c(9-12).

Its subcellular location is the plastid. It localises to the chloroplast thylakoid membrane. The catalysed reaction is ATP + H2O + 4 H(+)(in) = ADP + phosphate + 5 H(+)(out). Functionally, produces ATP from ADP in the presence of a proton gradient across the membrane. The catalytic sites are hosted primarily by the beta subunits. This Pinus koraiensis (Korean pine) protein is ATP synthase subunit beta, chloroplastic.